The sequence spans 401 residues: MSVELLPHSTEPHANGADKSVSAAARVTQSLKKQQVFDAEQVKLQSATDELKSAQMFAPQTPITAIDDVVDEALAAHPQALDVESIRPKLHQSRRWSWLARLSLMALLLLTLVQTVLGLRDAWLESPWLFSFYGAVLGIVGSWAIVGVIGEYRKLKRLKQVADTQETGARLALSMQMGEADGFIDNIVRHYPDSQGLQRLRHSLKDEHNDAEKVLLFEDLVLTERDELAKKIVRRYAAESAVLLAASPLAVLDMAIILWRNQRMLRDVAACYGIELGYWSRIKLIRSIVINIIYAGTSELVTDLGTQLLSVEMTGKLSARLAQGLGGGLLTARLGYQAMALCRPIRFKDEQRPKLTKVHQELLMELKQFAGNLLTKDGRDALKTQLEGTEVNTSSKEKSLS.

Residues 1-22 (MSVELLPHSTEPHANGADKSVS) are disordered. 3 consecutive transmembrane segments (helical) span residues 99–119 (LARL…VLGL), 129–149 (LFSF…VGVI), and 239–259 (ESAV…IILW).

This sequence belongs to the UPF0283 family.

The protein resides in the cell inner membrane. This Shewanella oneidensis (strain ATCC 700550 / JCM 31522 / CIP 106686 / LMG 19005 / NCIMB 14063 / MR-1) protein is UPF0283 membrane protein SO_1811.